The sequence spans 366 residues: Caffeic acid 3-O-methyltransferase (366 aa).

M131 to L137 lines the substrate pocket. Positions A163–M181 are substrate binding. G209, D232, D252, M253, and K266 together coordinate S-adenosyl-L-methionine. H270 (proton acceptor) is an active-site residue.

It belongs to the class I-like SAM-binding methyltransferase superfamily. Cation-independent O-methyltransferase family. COMT subfamily. In terms of assembly, homodimer.

The catalysed reaction is (E)-caffeate + S-adenosyl-L-methionine = (E)-ferulate + S-adenosyl-L-homocysteine + H(+). It functions in the pathway aromatic compound metabolism; phenylpropanoid biosynthesis. Its function is as follows. Catalyzes the conversion of caffeic acid to ferulic acid and of 5-hydroxyferulic acid to sinapic acid. The resulting products may subsequently be converted to the corresponding alcohols that are incorporated into lignins. This is Caffeic acid 3-O-methyltransferase (OMT) from Eucalyptus gunnii (Cider gum).